Consider the following 492-residue polypeptide: MLTGALLLLLLVVIVYLLDKKPSGLPPGIWGWPLVGRMPSRSKHLADQVKQLRKKYGDIITWRIGTRVNVFLCNFKLVKTALSKFECSDRPDFYTFKLFGEGNDVGVVFSNGVMWQTHRRFILRQLRDLGMGKSRLEAAIQHEAACLVQELKKHTDQPMPLPKSINLAVLNVIWKLVADHRYSLQDQEGQYFTQLLTTTTDNMQGFALNLFNYLPWLLMITPDFVKNWMGVRVLRDGVCELKDYMKTFIKEHQATLDPSNPKDLLDAYLIDLQERKEDPLSTMNIETVRAVIMDLFGAGTETTSTMIRWTILYLMKYPEVQAKIQREIDAAVPRGTLPSLEHKDKLAYFEATIHEVHRIVSLVPLGVSHYTNQDTELAGYRLPKGTVVMSHLECCHRDPSYWEKPNEFYPEHFLDDQGKFVKREHLVNFSVGRRVCVGESLARMELFVFLSAILQNFTFSAPKGEVLHTEKDPQQMLFSFPKPYQVIIRERE.

C436 is a binding site for heme.

The protein belongs to the cytochrome P450 family. The cofactor is heme.

Its subcellular location is the endoplasmic reticulum membrane. The protein localises to the microsome membrane. The catalysed reaction is an organic molecule + reduced [NADPH--hemoprotein reductase] + O2 = an alcohol + oxidized [NADPH--hemoprotein reductase] + H2O + H(+). Efficient in catalyzing the monooxygenation of benzphetamine, aminopyrine, benzo(a)pyrene, progesterone, and testosterone. The polypeptide is Cytochrome P450 2L1 (CYP2L1) (Panulirus argus (Caribbean spiny lobster)).